The following is a 488-amino-acid chain: Glutamyl-tRNA(Gln) amidotransferase subunit A (488 aa).

Residues lysine 77 and serine 152 each act as charge relay system in the active site. Serine 176 functions as the Acyl-ester intermediate in the catalytic mechanism.

It belongs to the amidase family. GatA subfamily. As to quaternary structure, heterotrimer of A, B and C subunits.

The enzyme catalyses L-glutamyl-tRNA(Gln) + L-glutamine + ATP + H2O = L-glutaminyl-tRNA(Gln) + L-glutamate + ADP + phosphate + H(+). In terms of biological role, allows the formation of correctly charged Gln-tRNA(Gln) through the transamidation of misacylated Glu-tRNA(Gln) in organisms which lack glutaminyl-tRNA synthetase. The reaction takes place in the presence of glutamine and ATP through an activated gamma-phospho-Glu-tRNA(Gln). This is Glutamyl-tRNA(Gln) amidotransferase subunit A from Latilactobacillus sakei subsp. sakei (strain 23K) (Lactobacillus sakei subsp. sakei).